Reading from the N-terminus, the 167-residue chain is Small ribosomal subunit protein uS5 (167 aa).

An S5 DRBM domain is found at 11-74; sequence LQEKLIAVNR…DKARRNMTTI (64 aa).

It belongs to the universal ribosomal protein uS5 family. Part of the 30S ribosomal subunit. Contacts proteins S4 and S8.

Functionally, with S4 and S12 plays an important role in translational accuracy. Located at the back of the 30S subunit body where it stabilizes the conformation of the head with respect to the body. This Baumannia cicadellinicola subsp. Homalodisca coagulata protein is Small ribosomal subunit protein uS5.